Consider the following 267-residue polypeptide: Ribosomal RNA small subunit methyltransferase A (267 aa).

S-adenosyl-L-methionine-binding residues include asparagine 18, leucine 20, glycine 45, glutamate 66, aspartate 91, and asparagine 112.

This sequence belongs to the class I-like SAM-binding methyltransferase superfamily. rRNA adenine N(6)-methyltransferase family. RsmA subfamily.

It is found in the cytoplasm. The catalysed reaction is adenosine(1518)/adenosine(1519) in 16S rRNA + 4 S-adenosyl-L-methionine = N(6)-dimethyladenosine(1518)/N(6)-dimethyladenosine(1519) in 16S rRNA + 4 S-adenosyl-L-homocysteine + 4 H(+). In terms of biological role, specifically dimethylates two adjacent adenosines (A1518 and A1519) in the loop of a conserved hairpin near the 3'-end of 16S rRNA in the 30S particle. May play a critical role in biogenesis of 30S subunits. The chain is Ribosomal RNA small subunit methyltransferase A from Shewanella woodyi (strain ATCC 51908 / MS32).